The primary structure comprises 354 residues: Uroporphyrinogen decarboxylase (354 aa).

Substrate contacts are provided by residues 27–31, Asp-77, Tyr-154, Ser-209, and His-327; that span reads RQAGR.

It belongs to the uroporphyrinogen decarboxylase family. As to quaternary structure, homodimer.

The protein localises to the cytoplasm. The enzyme catalyses uroporphyrinogen III + 4 H(+) = coproporphyrinogen III + 4 CO2. It participates in porphyrin-containing compound metabolism; protoporphyrin-IX biosynthesis; coproporphyrinogen-III from 5-aminolevulinate: step 4/4. Functionally, catalyzes the decarboxylation of four acetate groups of uroporphyrinogen-III to yield coproporphyrinogen-III. The protein is Uroporphyrinogen decarboxylase of Pseudomonas syringae pv. syringae (strain B728a).